A 197-amino-acid polypeptide reads, in one-letter code: Imidazoleglycerol-phosphate dehydratase (197 aa).

The protein belongs to the imidazoleglycerol-phosphate dehydratase family.

Its subcellular location is the cytoplasm. It catalyses the reaction D-erythro-1-(imidazol-4-yl)glycerol 3-phosphate = 3-(imidazol-4-yl)-2-oxopropyl phosphate + H2O. It functions in the pathway amino-acid biosynthesis; L-histidine biosynthesis; L-histidine from 5-phospho-alpha-D-ribose 1-diphosphate: step 6/9. The chain is Imidazoleglycerol-phosphate dehydratase (hisB) from Streptomyces coelicolor (strain ATCC BAA-471 / A3(2) / M145).